The sequence spans 216 residues: MVVIGEKFPEVEVKTTHGVIKLPDYFTKQGKWFILFSHPADFTPVCTTEFYGMQKRVEEFRKLGVEPIGLSVDQVFSHIKWIEWIKDNLSVEIDFPVIADDRGELAEKLGMIPSGATITARAVFVVDDKGIIRAIVYYPAEVGRDWDEILRLVKALKISTEKGVALPHKWPNNELIGDKVIVPPASTIEEKKQREEAKAKGEIECYDWWFCYKKLE.

The Thioredoxin domain occupies 2–158 (VVIGEKFPEV…ILRLVKALKI (157 aa)). Cys46 acts as the Cysteine sulfenic acid (-SOH) intermediate in catalysis. Arg121 contributes to the substrate binding site. Residues Cys205 and Cys211 are joined by a disulfide bond.

It belongs to the peroxiredoxin family. Prx6 subfamily. Homodecamer. Pentamer of dimers that assemble into a ring structure.

The protein localises to the cytoplasm. It catalyses the reaction a hydroperoxide + [thioredoxin]-dithiol = an alcohol + [thioredoxin]-disulfide + H2O. Functionally, thiol-specific peroxidase that catalyzes the reduction of hydrogen peroxide and organic hydroperoxides to water and alcohols, respectively. Plays a role in cell protection against oxidative stress by detoxifying peroxides. In Pyrococcus horikoshii (strain ATCC 700860 / DSM 12428 / JCM 9974 / NBRC 100139 / OT-3), this protein is Peroxiredoxin (ahpC).